The following is a 102-amino-acid chain: Small ribosomal subunit protein uS10 (102 aa).

This sequence belongs to the universal ribosomal protein uS10 family. As to quaternary structure, part of the 30S ribosomal subunit.

Functionally, involved in the binding of tRNA to the ribosomes. The chain is Small ribosomal subunit protein uS10 from Lactobacillus helveticus (strain DPC 4571).